The following is a 239-amino-acid chain: MNCLRDSGRGLIPAWETLLLTGALLSSCTCSATSKLPQMKGANTQLPVPGALEKDLSTSWFPELEAQPPTSSSPKGLPGRPRTSQEVPNAEDNPSLIPLVTFPESSKGIIYSDLNYSVILQWMVTMNPEPVLSWTFDGKPCGTGEKLFIRRLSPDQLGTYLCIARNTDKELVSEPVTVSLSPATGAPTVPAPTVAYPMKPNDYMSVSGGSAIALIVAATIGGLVLIGSVCFYILLALKK.

Positions 63-93 (ELEAQPPTSSSPKGLPGRPRTSQEVPNAEDN) are disordered. Residues 94 to 179 (PSLIPLVTFP…ELVSEPVTVS (86 aa)) form the Ig-like domain. Residues 214-234 (LIVAATIGGLVLIGSVCFYIL) traverse the membrane as a helical segment.

The protein localises to the cell membrane. In terms of biological role, may be involved in osteoclast differentiation. The protein is Immunoglobulin superfamily member 23 of Mus musculus (Mouse).